Reading from the N-terminus, the 124-residue chain is Small ribosomal subunit protein uS12c (124 aa).

Residues 105-124 (AGVKDRRQSRSKYGAKRPKA) are disordered. A compositionally biased stretch (basic residues) spans 113-124 (SRSKYGAKRPKA).

This sequence belongs to the universal ribosomal protein uS12 family. In terms of assembly, part of the 30S ribosomal subunit.

Its subcellular location is the plastid. It localises to the cyanelle. With S4 and S5 plays an important role in translational accuracy. Located at the interface of the 30S and 50S subunits. The polypeptide is Small ribosomal subunit protein uS12c (rps12) (Cyanophora paradoxa).